We begin with the raw amino-acid sequence, 449 residues long: Tapasin (449 aa).

The N-terminal stretch at 1-20 is a signal peptide; it reads MKPLSLLLAVASALGTAVSA. Residues 21-413 lie on the Lumenal side of the membrane; that stretch reads GPAVIECWMV…GLSGPSLEDS (393 aa). A disulfide bridge connects residues Cys-27 and Cys-91. A glycan (N-linked (GlcNAc...) asparagine) is linked at Asn-253. One can recognise an Ig-like C1-type domain in the interval 292–399; that stretch reads PKISLTPAPL…PTLGRSAEVT (108 aa). A disulfide bond links Cys-315 and Cys-382. A helical transmembrane segment spans residues 414–434; that stretch reads VGLFLSAFLLLGLIKALGWVA. Residues 435 to 449 lie on the Cytoplasmic side of the membrane; it reads ASRSTSKDPKEKKAQ.

In terms of assembly, heterodimer with PDIA3; disulfide-linked. Obligatory mediator for the interaction between newly assembled MHC class I molecules, calreticulin, PDIA3 and TAP. Up to 4 MHC class I/tapasin complexes bind to 1 TAP. Interacts with HLA-G-B2M complex; this interaction is required for loading of high affinity peptides. On its own or as part of MHC class I peptide loading complex, interacts with ligand-free MR1 or MR1-B2M complex, providing for stable MR1 pools ready for metabolite antigen processing.

The protein localises to the endoplasmic reticulum membrane. Involved in the association of MHC class I with transporter associated with antigen processing (TAP) and in the assembly of MHC class I with peptide (peptide loading). The polypeptide is Tapasin (TAPBP) (Canis lupus familiaris (Dog)).